The following is a 160-amino-acid chain: S-ribosylhomocysteine lyase (160 aa).

Fe cation-binding residues include H57, H61, and C127.

It belongs to the LuxS family. As to quaternary structure, homodimer. Fe cation is required as a cofactor.

It carries out the reaction S-(5-deoxy-D-ribos-5-yl)-L-homocysteine = (S)-4,5-dihydroxypentane-2,3-dione + L-homocysteine. Involved in the synthesis of autoinducer 2 (AI-2) which is secreted by bacteria and is used to communicate both the cell density and the metabolic potential of the environment. The regulation of gene expression in response to changes in cell density is called quorum sensing. Catalyzes the transformation of S-ribosylhomocysteine (RHC) to homocysteine (HC) and 4,5-dihydroxy-2,3-pentadione (DPD). This chain is S-ribosylhomocysteine lyase, found in Streptococcus pyogenes serotype M4 (strain MGAS10750).